We begin with the raw amino-acid sequence, 227 residues long: tRNA (guanine-N(7)-)-methyltransferase (227 aa).

Residues Glu58, Glu83, Asp110, and Asp132 each contribute to the S-adenosyl-L-methionine site. Residue Asp132 is part of the active site. Substrate is bound by residues Lys136, Asp168, and 205–208; that span reads TRFE.

This sequence belongs to the class I-like SAM-binding methyltransferase superfamily. TrmB family.

The catalysed reaction is guanosine(46) in tRNA + S-adenosyl-L-methionine = N(7)-methylguanosine(46) in tRNA + S-adenosyl-L-homocysteine. Its pathway is tRNA modification; N(7)-methylguanine-tRNA biosynthesis. In terms of biological role, catalyzes the formation of N(7)-methylguanine at position 46 (m7G46) in tRNA. The protein is tRNA (guanine-N(7)-)-methyltransferase of Acidithiobacillus ferrooxidans (strain ATCC 23270 / DSM 14882 / CIP 104768 / NCIMB 8455) (Ferrobacillus ferrooxidans (strain ATCC 23270)).